A 118-amino-acid chain; its full sequence is Vitelline membrane protein Vm32E (118 aa).

An N-terminal signal peptide occupies residues 1-17; that stretch reads MKIVALTLVAFVALAGA. The VM domain maps to 36 to 75; it reads GYPAPPCPTNYLFSCQPNLAPAPCAQEAQAPAYGSAGAYT.

This sequence belongs to the vitelline membrane family.

The protein localises to the secreted. Its function is as follows. Major early eggshell protein. This Drosophila simulans (Fruit fly) protein is Vitelline membrane protein Vm32E.